Here is a 3483-residue protein sequence, read N- to C-terminus: Nonribosomal peptide synthetase Ao415 (3483 aa).

The tract at residues 281 to 669 (TFKKLNETSN…DVHPLIKDVV (389 aa)) is adenylation 1. Residues 775 to 851 (EVFDELSTKI…GLRDHVSGKK (77 aa)) enclose the Carrier 1 domain. S812 is modified (O-(pantetheine 4'-phosphoryl)serine). The interval 886–1297 (ANVLPCSPMQ…YCLLHMLQNQ (412 aa)) is condensation 1. The interval 1363 to 1758 (TYRQFDDMGN…SADKDVAEIV (396 aa)) is adenylation 2. The region spanning 1865–1941 (EELSETEKVI…SLAKALSSAN (77 aa)) is the Carrier 2 domain. S1901 carries the O-(pantetheine 4'-phosphoryl)serine modification. The tract at residues 1981 to 2379 (IKPCTPLQEG…LLKNPEQEVA (399 aa)) is condensation 2. The Carrier 3 domain maps to 2412-2485 (TEAAVSIRRE…RMVVYLSSTK (74 aa)). S2446 carries the O-(pantetheine 4'-phosphoryl)serine modification. The tract at residues 2520–2917 (ESILPTTPLQ…MLQKIIGNPL (398 aa)) is condensation 3. The 77-residue stretch at 2954–3030 (DNYQNLERQV…KICLFLDKKQ (77 aa)) folds into the Carrier 4 domain. S2991 is modified (O-(pantetheine 4'-phosphoryl)serine). A condensation 4 region spans residues 3084–3368 (SEGRIFLPTF…VQEDLLKIST (285 aa)).

This sequence belongs to the NRP synthetase family.

Its pathway is siderophore biosynthesis. Functionally, nonribosomal peptide synthetase; part of the gene cluster that mediates the biosynthesis of desferriferrichrome that chelates Fe(3+) to form ferrichrome. Fe(3+) is a key factor for induction of trap formation and the fungus uses the iron chelating desferriferrichrome to sequester Fe(3+) to inhibit trap formation and increase nematicidal activity. The biosynthesis of desferriferrichrome requires the action of the L-ornithine N(5)-oxygenase (LOO) Ao414 that hydroxylates L-ornithine at N(5), resulting in the formation of N(5)-hydroxyl-L-ornithine, which is subsequently N-acetylated to yield N(5)-acetyl-N(5)-hydroxy-L-ornithine (L-AHO). L-AHO harbors one hydroxamate moiety, which is the key core responsible for chelating iron. Then, L-AHO is further condensated with glycines to form desferriferrichrome through the NRPS protein Ao415. The protein is Nonribosomal peptide synthetase Ao415 of Arthrobotrys oligospora (strain ATCC 24927 / CBS 115.81 / DSM 1491) (Nematode-trapping fungus).